The sequence spans 249 residues: 3alpha-hydroxy bile acid-CoA-ester 3-dehydrogenase 1/3 (249 aa).

NAD(+) contacts are provided by residues 15-18 (TRGI), glutamate 38, glutamate 42, and asparagine 92. Serine 144 is a binding site for substrate. Active-site proton donor/acceptor residues include tyrosine 157 and lysine 161. NAD(+) contacts are provided by residues lysine 161 and 190–192 (VDT).

The protein belongs to the short-chain dehydrogenases/reductases (SDR) family. Homotetramer.

The catalysed reaction is a 3alpha-hydroxy bile acid CoA + NAD(+) = a 3-oxo bile acid CoA + NADH + H(+). It catalyses the reaction choloyl-CoA + NAD(+) = 7alpha,12alpha-dihydroxy-3-oxochol-24-oyl-CoA + NADH + H(+). The enzyme catalyses chenodeoxycholoyl-CoA + NAD(+) = 7alpha-hydroxy-3-oxochol-24-oyl-CoA + NADH + H(+). It carries out the reaction deoxycholoyl-CoA + NAD(+) = 12alpha-hydroxy-3-oxocholan-24-oyl-CoA + NADH + H(+). The catalysed reaction is lithocholoyl-CoA + NAD(+) = 3-oxocholan-24-oyl-CoA + NADH + H(+). The protein operates within lipid metabolism; bile acid biosynthesis. Its function is as follows. Involved in the multi-step bile acid 7alpha-dehydroxylation pathway that transforms primary bile acids to secondary bile acids in the human gut. Catalyzes the oxidation of C3-hydroxyl group of CoA conjugated bile acids generating a C3-oxo bile acid intermediate. Can use choloyl-CoA, chenodeoxycholoyl-CoA, deoxycholoyl-CoA, and lithocholoyl-CoA as substrates with similar efficiency. Highly prefers NAD over NADP as cosubstrate. Also catalyzes the reverse reactions; in vitro, the preferred direction of reaction depends on the pH. Has very little activity with unconjugated (non-CoA) bile acid substrates. This chain is 3alpha-hydroxy bile acid-CoA-ester 3-dehydrogenase 1/3 (baiA1), found in Clostridium scindens (strain JCM 10418 / VPI 12708).